The following is a 299-amino-acid chain: Muscleblind-like protein (299 aa).

C3H1-type zinc fingers lie at residues 38–66 (WLQV…HPPP) and 72–100 (QGRV…HPPQ).

Belongs to the muscleblind family.

The protein resides in the nucleus. Binds to RNA with repeat sequences CUG and CCUG. The protein is Muscleblind-like protein of Caenorhabditis briggsae.